Here is a 183-residue protein sequence, read N- to C-terminus: Chromophore lyase CpcT/CpeT 4 (183 aa).

It belongs to the CpcT/CpeT biliprotein lyase family.

In terms of biological role, covalently attaches a chromophore to Cys residue(s) of phycobiliproteins. The sequence is that of Chromophore lyase CpcT/CpeT 4 from Gloeobacter violaceus (strain ATCC 29082 / PCC 7421).